The chain runs to 132 residues: FPRL1 inhibitory protein (132 aa).

The first 28 residues, 1–28 (MKKNITKVIIASTVIATGLLTQTNDAKA), serve as a signal peptide directing secretion.

The protein belongs to the CHIPS/FLIPr family.

Its subcellular location is the secreted. Its function is as follows. May be involved in countering the first line of host defense mechanisms. Impairs the leukocyte response to FPRL1 agonists by binding directly to host FPRL1. In Staphylococcus aureus (strain MW2), this protein is FPRL1 inhibitory protein (flr).